A 154-amino-acid polypeptide reads, in one-letter code: uncharacterized protein (154 aa).

Residues 1–143 form the HTH marR-type domain; it reads MTESERALLT…LRKLAGSLTK (143 aa). A DNA-binding region (H-T-H motif) is located at residues 57–80; the sequence is LSKLAMSLDLKPASVTRMTDILYK.

This is an uncharacterized protein from Bacillus subtilis (strain 168).